Reading from the N-terminus, the 212-residue chain is Peptide methionine sulfoxide reductase MsrA (212 aa).

The active site involves Cys52.

The protein belongs to the MsrA Met sulfoxide reductase family.

It carries out the reaction L-methionyl-[protein] + [thioredoxin]-disulfide + H2O = L-methionyl-(S)-S-oxide-[protein] + [thioredoxin]-dithiol. It catalyses the reaction [thioredoxin]-disulfide + L-methionine + H2O = L-methionine (S)-S-oxide + [thioredoxin]-dithiol. Has an important function as a repair enzyme for proteins that have been inactivated by oxidation. Catalyzes the reversible oxidation-reduction of methionine sulfoxide in proteins to methionine. The sequence is that of Peptide methionine sulfoxide reductase MsrA from Yersinia pseudotuberculosis serotype O:1b (strain IP 31758).